The following is a 106-amino-acid chain: uncharacterized protein (106 aa).

Belongs to the csb family.

This is an uncharacterized protein from Dictyostelium discoideum (Social amoeba).